A 222-amino-acid polypeptide reads, in one-letter code: Kinetochore protein Spc25 (222 aa).

Residues 51–86 (RHQRKVGKLQKVLMERREELDKRVSFIEELDRELEA) are a coiled coil.

The protein belongs to the SPC25 family. In terms of assembly, component of the Ndc80 complex, which is composed of Ndc80, Nuf2 and Spc25.

It is found in the nucleus. Its subcellular location is the chromosome. The protein localises to the centromere. The protein resides in the kinetochore. Its function is as follows. Acts as a component of the essential kinetochore-associated Ndc80 complex, which is required for chromosome segregation and spindle checkpoint activity during meiosis and mitosis. Required for kinetochore integrity and the organization of stable microtubule binding sites in the outer plate of the kinetochore. Participates in SAC signaling that responds specifically to disruptions in spindle microtubule dynamics. The NDC80 complex synergistically enhances the affinity of the SKA1 complex for microtubules and may allow the NDC80 complex to track depolymerizing microtubules. This Drosophila simulans (Fruit fly) protein is Kinetochore protein Spc25.